The chain runs to 265 residues: MISVGEALAKVRERKPLVHNITNFVVMNTTANALLALGASPVMAHAEEELEEMVRIADSVVVNIGTLDKFWINSMIKAAKLAKEYGKPLVLDPVGAGATRLRTKTALEVLKIGATIVKGNFGEISALLGEEGKTRGVDSSTYDPERAKELALAVAEEFSTIVAVTGKVDYVSDGKRVYAVYNGHELLGRVTGTGCIVAALTGAFVAVNDPLTSAVSSLVVFEVAAEKAAEEAKAPGTFHAKLYDWLYLLTPEDVERLKKIEVVKV.

M43 is a substrate binding site. Residues K118 and T165 each contribute to the ATP site. Position 192 (G192) interacts with substrate.

It belongs to the Thz kinase family. The cofactor is Mg(2+).

The catalysed reaction is 5-(2-hydroxyethyl)-4-methylthiazole + ATP = 4-methyl-5-(2-phosphooxyethyl)-thiazole + ADP + H(+). It functions in the pathway cofactor biosynthesis; thiamine diphosphate biosynthesis; 4-methyl-5-(2-phosphoethyl)-thiazole from 5-(2-hydroxyethyl)-4-methylthiazole: step 1/1. In terms of biological role, catalyzes the phosphorylation of the hydroxyl group of 4-methyl-5-beta-hydroxyethylthiazole (THZ). In Pyrococcus furiosus (strain ATCC 43587 / DSM 3638 / JCM 8422 / Vc1), this protein is Hydroxyethylthiazole kinase.